We begin with the raw amino-acid sequence, 314 residues long: Deoxyribonuclease-1-like 1 (314 aa).

A signal peptide spans 1–37 (MPFGQPGFLWRVPDAHIAMRGLVMAPLLILLVGGTEA). Asparagine 102 is a glycosylation site (N-linked (GlcNAc...) asparagine). Glutamate 113 is a catalytic residue. N-linked (GlcNAc...) asparagine glycosylation occurs at asparagine 133. Histidine 164 is an active-site residue. The cysteines at positions 203 and 240 are disulfide-linked. The N-linked (GlcNAc...) asparagine glycan is linked to asparagine 239.

Belongs to the DNase I family. As to expression, highly expressed in heart and skeletal muscles. Low expression in brain and thymus. Intermediated expression in other tissues.

It localises to the endoplasmic reticulum. The chain is Deoxyribonuclease-1-like 1 (Dnase1l1) from Mus musculus (Mouse).